Here is a 1305-residue protein sequence, read N- to C-terminus: ABC transporter FPSE_09185 (1305 aa).

An N-linked (GlcNAc...) asparagine glycan is attached at asparagine 28. A run of 6 helical transmembrane segments spans residues 44–64 (FCVYVVGALASIGVGVTMPLM), 99–119 (LYIVGLFLGRWLLNSINKFCF), 172–192 (RLGTFVTYVSTIIAAIAVAFT), 199–219 (IVSASLLVYIAIIIAIVVPIY), 277–297 (IIGAQTGLVFFGIFGVFGLAF), and 312–332 (VGVVIIVLTSVMLILFAFSYL). Positions 48–348 (VVGALASIGV…ISQAMVAATE (301 aa)) constitute an ABC transmembrane type-1 1 domain. The ABC transporter 1 domain maps to 372–663 (LIFKDVTFEY…ENGVYYSLVE (292 aa)). Residue 407–414 (GPSGSGKS) participates in ATP binding. The tract at residues 434–454 (EAATPRSSKEGERDNHDERKY) is disordered. A compositionally biased stretch (basic and acidic residues) spans 440–454 (SSKEGERDNHDERKY). N-linked (GlcNAc...) asparagine glycans are attached at residues asparagine 468, asparagine 507, and asparagine 525. 6 helical membrane passes run 737–757 (FLLITIASMGVGAATPLQAWL), 780–800 (GFMWLALAGGVGVAYFFQCWI), 851–873 (GVFGLNLASATSSVFTIVGCLII), 877–899 (FGWKLGLVGLCVTVPIMMVSGFW), 964–984 (AVIFGFAESATLGCQALILWY), and 999–1019 (FMVSYMAIINGVEYAGQILGV). In terms of domain architecture, ABC transmembrane type-1 2 spans 738 to 1025 (LLITIASMGV…ILGVAPSAAQ (288 aa)). Positions 1038-1057 (DSNRSSQEAEKSGPTVEDTD) are disordered. Asparagine 1040, asparagine 1066, and asparagine 1075 each carry an N-linked (GlcNAc...) asparagine glycan. The ABC transporter 2 domain maps to 1062–1300 (IELCNVSFKY…RGIYWDMCQT (239 aa)). 1096–1103 (GPSGCGKT) lines the ATP pocket. An N-linked (GlcNAc...) asparagine glycan is attached at asparagine 1125.

It belongs to the ABC transporter superfamily. ABCB family. Multidrug resistance exporter (TC 3.A.1.201) subfamily.

The protein localises to the membrane. ABC transporter; part of the gene cluster that mediates the biosynthesis of the lipopeptides W493 A and B. W493 A and B consist of six amino acid residues D-allo-thr, L-Ala, D-Ala, L-Gln, D-Tyr, and L-Val/L-Ile linked to a 3-hydroxy-4-methyltetradecanoic acid polyketide chain. May be involved in excretion or internal transport of W493 A and B. This Fusarium pseudograminearum (strain CS3096) (Wheat and barley crown-rot fungus) protein is ABC transporter FPSE_09185.